Reading from the N-terminus, the 191-residue chain is dITP/XTP pyrophosphatase (191 aa).

Residue 8-13 participates in substrate binding; it reads SKNQGK. Mg(2+) is bound by residues E38 and D67. D67 (proton acceptor) is an active-site residue. Substrate is bound by residues S68, 146–149, K169, and 174–175; these read FGYD and HR.

The protein belongs to the HAM1 NTPase family. As to quaternary structure, homodimer. It depends on Mg(2+) as a cofactor.

The catalysed reaction is XTP + H2O = XMP + diphosphate + H(+). The enzyme catalyses dITP + H2O = dIMP + diphosphate + H(+). It catalyses the reaction ITP + H2O = IMP + diphosphate + H(+). Its function is as follows. Pyrophosphatase that catalyzes the hydrolysis of nucleoside triphosphates to their monophosphate derivatives, with a high preference for the non-canonical purine nucleotides XTP (xanthosine triphosphate), dITP (deoxyinosine triphosphate) and ITP. Seems to function as a house-cleaning enzyme that removes non-canonical purine nucleotides from the nucleotide pool, thus preventing their incorporation into DNA/RNA and avoiding chromosomal lesions. This chain is dITP/XTP pyrophosphatase, found in Prochlorococcus marinus subsp. pastoris (strain CCMP1986 / NIES-2087 / MED4).